We begin with the raw amino-acid sequence, 279 residues long: Acyl-coenzyme A thioesterase MBLAC2 (279 aa).

Ser-2 is subject to N-acetylserine. Zn(2+) contacts are provided by His-83, His-85, Asp-87, His-88, His-170, Asp-189, and His-231. Cys-254 carries S-palmitoyl cysteine lipidation.

It belongs to the metallo-beta-lactamase superfamily. Glyoxalase II family. Zn(2+) serves as cofactor. Palmitoylated on Cys-254 by ZDHHC20.

The protein resides in the endoplasmic reticulum membrane. The protein localises to the cell membrane. The catalysed reaction is hexadecanoyl-CoA + H2O = hexadecanoate + CoA + H(+). The enzyme catalyses dodecanoyl-CoA + H2O = dodecanoate + CoA + H(+). It carries out the reaction tetradecanoyl-CoA + H2O = tetradecanoate + CoA + H(+). It catalyses the reaction octadecanoyl-CoA + H2O = octadecanoate + CoA + H(+). The catalysed reaction is a beta-lactam + H2O = a substituted beta-amino acid. Functionally, acyl-CoA thioesterases are a group of enzymes that catalyze the hydrolysis of acyl-CoAs to the free fatty acid and coenzyme A (CoASH), providing the potential to regulate intracellular levels of acyl-CoAs, free fatty acids and CoASH. Has an acyl-CoA thioesterase activity towards the long chain fatty acyl-CoA thioester palmitoyl-CoA (hexadecanoyl-CoA; C16:0-CoA). Displays a substrate preference for fatty acyl-CoAs with chain-lengths C12-C18. This chain is Acyl-coenzyme A thioesterase MBLAC2 (MBLAC2), found in Bos taurus (Bovine).